The following is a 210-amino-acid chain: Chaperone protein TorD (210 aa).

Belongs to the TorD/DmsD family. TorD subfamily.

It is found in the cytoplasm. Its function is as follows. Involved in the biogenesis of TorA. Acts on TorA before the insertion of the molybdenum cofactor and, as a result, probably favors a conformation of the apoenzyme that is competent for acquiring the cofactor. The protein is Chaperone protein TorD of Salmonella agona (strain SL483).